Here is a 1007-residue protein sequence, read N- to C-terminus: Inversin-A (1007 aa).

ANK repeat units lie at residues 9 to 39 (SLAS…VIDQ), 43 to 72 (LGRT…QVNH), 76 to 105 (SGRT…DCTH), 109 to 140 (RDIT…QVDA), 144 to 173 (RKQT…NIGI), 177 to 209 (EGKI…TESL), 216 to 246 (EGRT…NVAP), 250 to 279 (LFRT…SPNI), 284 to 313 (QGAT…VRDE), 317 to 346 (EGRT…ELEV), 352 to 381 (YGGT…QVDA), 385 to 414 (MKHT…KVHL), 418 to 447 (DGRS…NPDA), 451 to 480 (EGRT…DPNI), 484 to 513 (NGRT…FPNQ), and 519 to 549 (ERYT…SIAA). The short motif at 486–494 (RTALHWSCN) is the D-box 1 element. Positions 551–580 (QDIAASKIQAVYKGHKVRRAFQERKNLLMK) constitute an IQ 1 domain. Basic and acidic residues-rich tracts occupy residues 585–599 (RKGA…ENRQ) and 608–652 (GKQK…HQEE). Disordered stretches follow at residues 585–837 (RKGA…KEFS) and 868–893 (SAKS…SALK). Over residues 684 to 701 (IQSSPIEHVHTNSIQTRM) the composition is skewed to polar residues. The span at 702–712 (SPSRTSISHSS) shows a compositional bias: low complexity. A compositionally biased stretch (polar residues) spans 727–745 (NPTQNNTQPRRTSRPQIES). Residues 751-771 (HRIEDLVQKESRRKSHREERK) are compositionally biased toward basic and acidic residues. The span at 772–784 (GSHRQRASSHHRL) shows a compositional bias: basic residues. Polar residues predominate over residues 870 to 893 (KSGQRPLTETQSPEKACQGSSALK). The D-box 2 motif lies at 964-972 (RKQLFQRKK). The IQ 2 domain occupies 971 to 1000 (KKHAATVIQKAWRTYCIRKSSRKTRHSHLR).

In terms of assembly, interacts with apc2. Binds calmodulin.

The protein resides in the cytoplasm. The protein localises to the cytoskeleton. In terms of biological role, required for normal renal development and establishment of left-right axis. Probably acts as a molecular switch between different Wnt signaling pathways. Inhibits the canonical Wnt pathway by targeting cytoplasmic disheveled for degradation by the ubiquitin-proteasome. This suggests that it is required in renal development to oppose the repression of terminal differentiation of tubular epithelial cells by Wnt signaling. Plays a central role in convergent extension movements in gastrulating embryos, a processus regulated by Wnt signaling. This Xenopus laevis (African clawed frog) protein is Inversin-A (invs-a).